The chain runs to 133 residues: Nickel-responsive regulator (133 aa).

Histidine 76, histidine 87, histidine 89, and cysteine 95 together coordinate Ni(2+).

Belongs to the transcriptional regulatory CopG/NikR family. As to quaternary structure, homotetramer. The cofactor is Ni(2+).

Transcriptional repressor of the nikABCDE operon. Is active in the presence of excessive concentrations of intracellular nickel. The protein is Nickel-responsive regulator of Shigella dysenteriae serotype 1 (strain Sd197).